We begin with the raw amino-acid sequence, 134 residues long: F420-non-reducing hydrogenase vhu iron-sulfur subunit D (134 aa).

2 non-standard amino acids (selenocysteine) are found at residues Sec-13 and Sec-64.

This sequence belongs to the MvhD/VhuD family. In terms of assembly, the F420-non-reducing hydrogenase vhu is composed of four subunits; VhuA, VhuD, VhuG and VhuU. It depends on [2Fe-2S] cluster as a cofactor.

The sequence is that of F420-non-reducing hydrogenase vhu iron-sulfur subunit D (vhuD) from Methanocaldococcus jannaschii (strain ATCC 43067 / DSM 2661 / JAL-1 / JCM 10045 / NBRC 100440) (Methanococcus jannaschii).